We begin with the raw amino-acid sequence, 381 residues long: Putative glutamate--cysteine ligase 2 (381 aa).

This sequence belongs to the glutamate--cysteine ligase type 2 family. YbdK subfamily.

It carries out the reaction L-cysteine + L-glutamate + ATP = gamma-L-glutamyl-L-cysteine + ADP + phosphate + H(+). Its function is as follows. ATP-dependent carboxylate-amine ligase which exhibits weak glutamate--cysteine ligase activity. This is Putative glutamate--cysteine ligase 2 from Polaromonas naphthalenivorans (strain CJ2).